The sequence spans 66 residues: Beta-toxin Chui3 (66 aa).

In terms of domain architecture, LCN-type CS-alpha/beta spans 1-66 (KEGYLVELGT…VWPLKNKTCR (66 aa)). 4 cysteine pairs are disulfide-bonded: Cys12-Cys65, Cys16-Cys41, Cys25-Cys46, and Cys29-Cys48.

The protein belongs to the long (4 C-C) scorpion toxin superfamily. Sodium channel inhibitor family. Beta subfamily. In terms of tissue distribution, expressed by the venom gland.

It localises to the secreted. Its function is as follows. Beta toxins bind voltage-independently at site-4 of sodium channels (Nav) and shift the voltage of activation toward more negative potentials thereby affecting sodium channel activation and promoting spontaneous and repetitive firing. Acts on human sodium channel Nav1.6/SCN8A. This Centruroides huichol (Scorpion) protein is Beta-toxin Chui3.